A 1382-amino-acid chain; its full sequence is Hepatocyte growth factor receptor (1382 aa).

Positions 1–24 are cleaved as a signal peptide; it reads MKASAVLAPGILALLFTLVQGNDG. The Extracellular segment spans residues 25–933; sequence ECQEALAKSE…VIVQPDQNFT (909 aa). Positions 27-516 constitute a Sema domain; that stretch reads QEALAKSEMN…TGKKITKIPL (490 aa). 3 N-linked (GlcNAc...) asparagine glycosylation sites follow: Asn45, Asn100, and Asn106. Intrachain disulfides connect Cys95-Cys101, Cys98-Cys160, Cys133-Cys141, and Cys173-Cys176. Residues Asn203 and Asn359 are each glycosylated (N-linked (GlcNAc...) asparagine). Cystine bridges form between Cys299-Cys364 and Cys386-Cys398. N-linked (GlcNAc...) asparagine glycosylation is found at Asn400 and Asn406. Intrachain disulfides connect Cys521-Cys539, Cys527-Cys562, Cys530-Cys546, and Cys542-Cys552. 3 consecutive IPT/TIG domains span residues 564–656, 658–740, and 743–837; these read PAIH…FSYV, PVIT…FSYR, and PIVH…LIYV. Thr583 carries an O-linked (Man) threonine glycan. N-linked (GlcNAc...) asparagine glycans are attached at residues Asn608 and Asn636. 2 O-linked (Man) threonine glycosylation sites follow: Thr677 and Thr762. 3 N-linked (GlcNAc...) asparagine glycosylation sites follow: Asn786, Asn880, and Asn931. The chain crosses the membrane as a helical span at residues 934–956; sequence GLIVGVVSISIILLLLLGLFLWM. Topologically, residues 957-1382 are cytoplasmic; it reads KKRKQIKDLG…QDNVNGEVDT (426 aa). Position 967 is a phosphoserine (Ser967). Thr978 carries the phosphothreonine modification. A phosphoserine mark is found at Ser991, Ser998, and Ser1001. The residue at position 1004 (Tyr1004) is a Phosphotyrosine. A Protein kinase domain is found at 1079-1346; it reads VHFNEVIGRG…RISAIFSTFI (268 aa). Residues 1085 to 1093 and Lys1111 contribute to the ATP site; that span reads IGRGHFGCV. Residue Asp1205 is the Proton acceptor of the active site. Residues 1213 to 1382 form an interaction with RANBP9 region; that stretch reads LDEKFTVKVA…QDNVNGEVDT (170 aa). Tyr1231 bears the Phosphotyrosine mark. Tyr1235 and Tyr1236 each carry phosphotyrosine; by autocatalysis. Thr1290 is modified (phosphothreonine). The interaction with MUC20 stretch occupies residues 1321–1360; the sequence is WHPKAEMRPSFSELVSRISAIFSTFIGEHYVHVNATYVNV. A phosphotyrosine; by autocatalysis mark is found at Tyr1350 and Tyr1357. The residue at position 1366 (Tyr1366) is a Phosphotyrosine.

It belongs to the protein kinase superfamily. Tyr protein kinase family. As to quaternary structure, heterodimer made of an alpha chain (50 kDa) and a beta chain (145 kDa) which are disulfide linked. Binds PLXNB1. Interacts when phosphorylated with downstream effectors including STAT3, PIK3R1, SRC, PCLG1, GRB2 and GAB1. Interacts with SPSB1, SPSB2 and SPSB4. Interacts with INPP5D/SHIP1. When phosphorylated at Tyr-1357, interacts with INPPL1/SHIP2. Interacts with RANBP9 and RANBP10, as well as SPSB1, SPSB2, SPSB3 and SPSB4. SPSB1 binding occurs in the presence and in the absence of HGF, however HGF treatment has a positive effect on this interaction. Interacts with MUC20; prevents interaction with GRB2 and suppresses hepatocyte growth factor-induced cell proliferation. Interacts with GRB10. Interacts with PTPN1 and PTPN2. Interacts with HSP90AA1 and HSP90AB1; the interaction suppresses MET kinase activity. Interacts with tensin TNS3. Interacts (when phosphorylated) with tensin TNS4 (via SH2 domain); the interaction increases MET protein stability by inhibiting MET endocytosis and subsequent lysosomal degradation. Post-translationally, autophosphorylated in response to ligand binding on Tyr-1235 and Tyr-1236 in the kinase domain leading to further phosphorylation of Tyr-1350 and Tyr-1357 in the C-terminal multifunctional docking site. Dephosphorylated by PTPRJ at Tyr-1350 and Tyr-1366. Dephosphorylated by PTPN1 and PTPN2. Ubiquitinated. Ubiquitination by CBL regulates the receptor stability and activity through proteasomal degradation. In terms of processing, O-mannosylation of IPT/TIG domains by TMEM260 is required for protein maturation. O-mannosylated residues are composed of single mannose glycans that are not elongated or modified.

It is found in the membrane. The enzyme catalyses L-tyrosyl-[protein] + ATP = O-phospho-L-tyrosyl-[protein] + ADP + H(+). In its inactive state, the C-terminal tail interacts with the catalytic domain and inhibits the kinase activity. Upon ligand binding, the C-terminal tail is displaced and becomes phosphorylated, thus increasing the kinase activity. In terms of biological role, receptor tyrosine kinase that transduces signals from the extracellular matrix into the cytoplasm by binding to hepatocyte growth factor/HGF ligand. Regulates many physiological processes including proliferation, scattering, morphogenesis and survival. Ligand binding at the cell surface induces autophosphorylation of MET on its intracellular domain that provides docking sites for downstream signaling molecules. Following activation by ligand, interacts with the PI3-kinase subunit PIK3R1, PLCG1, SRC, GRB2, STAT3 or the adapter GAB1. Recruitment of these downstream effectors by MET leads to the activation of several signaling cascades including the RAS-ERK, PI3 kinase-AKT, or PLCgamma-PKC. The RAS-ERK activation is associated with the morphogenetic effects while PI3K/AKT coordinates prosurvival effects. During embryonic development, MET signaling plays a role in gastrulation, development and migration of muscles and neuronal precursors, angiogenesis and kidney formation. In adults, participates in wound healing as well as organ regeneration and tissue remodeling. Also promotes differentiation and proliferation of hematopoietic cells. This is Hepatocyte growth factor receptor (MET) from Eulemur macaco macaco (Black lemur).